The sequence spans 77 residues: Secapin (77 aa).

An N-terminal signal peptide occupies residues 1–32; the sequence is MKNYSKNATHLITVLLFSFVVILLIIPSKCEA. Positions 33-52 are excised as a propeptide; sequence VSNDMQPLEARSADLIPEPR. A disulfide bridge connects residues Cys-61 and Cys-72.

This sequence belongs to the secapin family. Expressed by the venom gland.

The protein localises to the secreted. Functionally, nontoxic peptide. The chain is Secapin from Vespa velutina nigrithorax (Hornet).